The chain runs to 426 residues: Enolase (426 aa).

Glutamine 162 lines the (2R)-2-phosphoglycerate pocket. The active-site Proton donor is the glutamate 204. Mg(2+) contacts are provided by aspartate 241, glutamate 284, and aspartate 311. Lysine 336, arginine 365, serine 366, and lysine 387 together coordinate (2R)-2-phosphoglycerate. Lysine 336 (proton acceptor) is an active-site residue.

Belongs to the enolase family. It depends on Mg(2+) as a cofactor.

The protein localises to the cytoplasm. It is found in the secreted. Its subcellular location is the cell surface. The enzyme catalyses (2R)-2-phosphoglycerate = phosphoenolpyruvate + H2O. It functions in the pathway carbohydrate degradation; glycolysis; pyruvate from D-glyceraldehyde 3-phosphate: step 4/5. Functionally, catalyzes the reversible conversion of 2-phosphoglycerate (2-PG) into phosphoenolpyruvate (PEP). It is essential for the degradation of carbohydrates via glycolysis. In Acidithiobacillus ferrooxidans (strain ATCC 23270 / DSM 14882 / CIP 104768 / NCIMB 8455) (Ferrobacillus ferrooxidans (strain ATCC 23270)), this protein is Enolase.